The primary structure comprises 312 residues: tRNA-cytidine(32) 2-sulfurtransferase (312 aa).

The PP-loop motif signature appears at 48-53 (SGGKDS). Residues Cys123, Cys126, and Cys214 each contribute to the [4Fe-4S] cluster site.

It belongs to the TtcA family. In terms of assembly, homodimer. Mg(2+) is required as a cofactor. Requires [4Fe-4S] cluster as cofactor.

It localises to the cytoplasm. The enzyme catalyses cytidine(32) in tRNA + S-sulfanyl-L-cysteinyl-[cysteine desulfurase] + AH2 + ATP = 2-thiocytidine(32) in tRNA + L-cysteinyl-[cysteine desulfurase] + A + AMP + diphosphate + H(+). It functions in the pathway tRNA modification. In terms of biological role, catalyzes the ATP-dependent 2-thiolation of cytidine in position 32 of tRNA, to form 2-thiocytidine (s(2)C32). The sulfur atoms are provided by the cysteine/cysteine desulfurase (IscS) system. The chain is tRNA-cytidine(32) 2-sulfurtransferase from Mannheimia succiniciproducens (strain KCTC 0769BP / MBEL55E).